The chain runs to 618 residues: Chaperone protein HscA homolog (618 aa).

It belongs to the heat shock protein 70 family.

Its function is as follows. Chaperone involved in the maturation of iron-sulfur cluster-containing proteins. Has a low intrinsic ATPase activity which is markedly stimulated by HscB. The protein is Chaperone protein HscA homolog of Variovorax paradoxus (strain S110).